The chain runs to 435 residues: Histidinol dehydrogenase (435 aa).

NAD(+) is bound by residues Tyr131, Gln189, and Asn212. Positions 238, 260, and 263 each coordinate substrate. Residues Gln260 and His263 each coordinate Zn(2+). Catalysis depends on proton acceptor residues Glu327 and His328. Substrate is bound by residues His328, Asp361, Glu415, and His420. Asp361 contacts Zn(2+). His420 is a Zn(2+) binding site.

It belongs to the histidinol dehydrogenase family. Homodimer. Zn(2+) serves as cofactor.

The catalysed reaction is L-histidinol + 2 NAD(+) + H2O = L-histidine + 2 NADH + 3 H(+). The protein operates within amino-acid biosynthesis; L-histidine biosynthesis; L-histidine from 5-phospho-alpha-D-ribose 1-diphosphate: step 9/9. Its function is as follows. Catalyzes the sequential NAD-dependent oxidations of L-histidinol to L-histidinaldehyde and then to L-histidine. This is Histidinol dehydrogenase (hisD) from Buchnera aphidicola subsp. Schizaphis graminum (strain Sg).